A 931-amino-acid chain; its full sequence is Valine--tRNA ligase (931 aa).

The short motif at 42-52 is the 'HIGH' region element; it reads PNVTGSLHMGH. A 'KMSKS' region motif is present at residues 523-527; it reads KMSKS. Lysine 526 contributes to the ATP binding site. Positions 859 to 931 form a coiled coil; sequence MAGLIDKEAE…EEQLEKIKYL (73 aa).

It belongs to the class-I aminoacyl-tRNA synthetase family. ValS type 1 subfamily. In terms of assembly, monomer.

The protein localises to the cytoplasm. It carries out the reaction tRNA(Val) + L-valine + ATP = L-valyl-tRNA(Val) + AMP + diphosphate. Functionally, catalyzes the attachment of valine to tRNA(Val). As ValRS can inadvertently accommodate and process structurally similar amino acids such as threonine, to avoid such errors, it has a 'posttransfer' editing activity that hydrolyzes mischarged Thr-tRNA(Val) in a tRNA-dependent manner. This chain is Valine--tRNA ligase, found in Alcanivorax borkumensis (strain ATCC 700651 / DSM 11573 / NCIMB 13689 / SK2).